Here is a 342-residue protein sequence, read N- to C-terminus: Deoxyhypusine synthase regulatory subunit (342 aa).

NAD(+)-binding positions include 72–76 (SNLIS), 98–100 (TAG), Glu104, Asp213, 282–283 (TG), and 316–317 (DA).

This sequence belongs to the deoxyhypusine synthase family. In terms of assembly, heterotetramer formed by a homodimer of the non-catalytic regulatory subunit DHSp and a homodimer of the catalytic subunit DHSc where DHSc appears to bind spermidine and DHSp appears to bind NAD(+).

The protein operates within protein modification; eIF5A hypusination. Its function is as follows. Required for the activation and stability of deoxyhypusine synthase DHSc. Required for cell growth and survival. The chain is Deoxyhypusine synthase regulatory subunit from Trypanosoma brucei brucei (strain 927/4 GUTat10.1).